Consider the following 236-residue polypeptide: Phosphoribosylaminoimidazole-succinocarboxamide synthase (236 aa).

The protein belongs to the SAICAR synthetase family.

It carries out the reaction 5-amino-1-(5-phospho-D-ribosyl)imidazole-4-carboxylate + L-aspartate + ATP = (2S)-2-[5-amino-1-(5-phospho-beta-D-ribosyl)imidazole-4-carboxamido]succinate + ADP + phosphate + 2 H(+). Its pathway is purine metabolism; IMP biosynthesis via de novo pathway; 5-amino-1-(5-phospho-D-ribosyl)imidazole-4-carboxamide from 5-amino-1-(5-phospho-D-ribosyl)imidazole-4-carboxylate: step 1/2. The chain is Phosphoribosylaminoimidazole-succinocarboxamide synthase from Pseudomonas putida (strain ATCC 700007 / DSM 6899 / JCM 31910 / BCRC 17059 / LMG 24140 / F1).